Consider the following 882-residue polypeptide: MRKVHLFLVLVHFIYISTSRSDSISERDILLQFKGSISDDPYNSLASWVSDGDLCNSFNGITCNPQGFVDKIVLWNTSLAGTLAPGLSNLKFIRVLNLFGNRFTGNLPLDYFKLQTLWTINVSSNALSGPIPEFISELSSLRFLDLSKNGFTGEIPVSLFKFCDKTKFVSLAHNNIFGSIPASIVNCNNLVGFDFSYNNLKGVLPPRICDIPVLEYISVRNNLLSGDVSEEIQKCQRLILVDLGSNLFHGLAPFAVLTFKNITYFNVSWNRFGGEIGEIVDCSESLEFLDASSNELTGRIPTGVMGCKSLKLLDLESNKLNGSIPGSIGKMESLSVIRLGNNSIDGVIPRDIGSLEFLQVLNLHNLNLIGEVPEDISNCRVLLELDVSGNDLEGKISKKLLNLTNIKILDLHRNRLNGSIPPELGNLSKVQFLDLSQNSLSGPIPSSLGSLNTLTHFNVSYNNLSGVIPPVPMIQAFGSSAFSNNPFLCGDPLVTPCNSRGAAAKSRNSDALSISVIIVIIAAAVILFGVCIVLALNLRARKRRKDEEILTVETTPLASSIDSSGVIIGKLVLFSKNLPSKYEDWEAGTKALLDKENIIGMGSIGSVYRASFEGGVSIAVKKLETLGRIRNQEEFEQEIGRLGGLQHPNLSSFQGYYFSSTMQLILSEFVPNGSLYDNLHLRIFPGTSSSYGNTDLNWHRRFQIALGTAKALSFLHNDCKPAILHLNVKSTNILLDERYEAKLSDYGLEKFLPVMDSFGLTKKFHNAVGYIAPELAQQSLRASEKCDVYSYGVVLLELVTGRKPVESPSENQVLILRDYVRDLLETGSASDCFDRRLREFEENELIQVMKLGLLCTSENPLKRPSMAEVVQVLESIRNGFGS.

Positions 1-21 are cleaved as a signal peptide; that stretch reads MRKVHLFLVLVHFIYISTSRS. The Extracellular portion of the chain corresponds to 22–515; that stretch reads DSISERDILL…SRNSDALSIS (494 aa). Asn-76 carries an N-linked (GlcNAc...) asparagine glycan. LRR repeat units follow at residues 92 to 113, 116 to 138, 140 to 162, 165 to 187, 189 to 210, 213 to 235, 237 to 258, 261 to 283, 285 to 308, 309 to 331, 333 to 355, 357 to 379, 381 to 404, 405 to 427, 429 to 451, and 453 to 475; these read FIRV…DYFK, TLWT…ISEL, SLRF…LFKF, KTKF…IVNC, NLVG…RICD, VLEY…IQKC, RLIL…AVLT, NITY…VDCS, SLEF…MGCK, SLKL…IGKM, SLSV…IGSL, FLQV…ISNC, VLLE…LNLT, NIKI…LGNL, KVQF…LGSL, and TLTH…PMIQ. A glycan (N-linked (GlcNAc...) asparagine) is linked at Asn-121. Asn-261 and Asn-266 each carry an N-linked (GlcNAc...) asparagine glycan. N-linked (GlcNAc...) asparagine glycans are attached at residues Asn-321 and Asn-341. N-linked (GlcNAc...) asparagine glycans are attached at residues Asn-402, Asn-417, and Asn-426. 2 N-linked (GlcNAc...) asparagine glycosylation sites follow: Asn-458 and Asn-463. A helical transmembrane segment spans residues 516-536; sequence VIIVIIAAAVILFGVCIVLAL. Over 537–882 the chain is Cytoplasmic; that stretch reads NLRARKRRKD…LESIRNGFGS (346 aa). Thr-589 bears the Phosphothreonine mark. One can recognise a Protein kinase domain in the interval 593-876; the sequence is LDKENIIGMG…AEVVQVLESI (284 aa). Residues 599–607 and Lys-621 contribute to the ATP site; that span reads IGMGSIGSV. Phosphotyrosine is present on Tyr-770.

The protein belongs to the protein kinase superfamily. Ser/Thr protein kinase family.

The protein localises to the cell membrane. The enzyme catalyses L-seryl-[protein] + ATP = O-phospho-L-seryl-[protein] + ADP + H(+). It carries out the reaction L-threonyl-[protein] + ATP = O-phospho-L-threonyl-[protein] + ADP + H(+). In Arabidopsis thaliana (Mouse-ear cress), this protein is Probable LRR receptor-like serine/threonine-protein kinase At1g12460.